Reading from the N-terminus, the 503-residue chain is Glycerol kinase (503 aa).

Residue T14 participates in ADP binding. ATP-binding residues include T14, T15, and S16. Position 14 (T14) interacts with sn-glycerol 3-phosphate. R18 contacts ADP. Sn-glycerol 3-phosphate-binding residues include R84, E85, Y136, and D246. Glycerol is bound by residues R84, E85, Y136, D246, and Q247. Residues T268 and G311 each contribute to the ADP site. Positions 268, 311, 315, and 412 each coordinate ATP. G412 and N416 together coordinate ADP.

Belongs to the FGGY kinase family.

The catalysed reaction is glycerol + ATP = sn-glycerol 3-phosphate + ADP + H(+). Its pathway is polyol metabolism; glycerol degradation via glycerol kinase pathway; sn-glycerol 3-phosphate from glycerol: step 1/1. Inhibited by fructose 1,6-bisphosphate (FBP). Its function is as follows. Key enzyme in the regulation of glycerol uptake and metabolism. Catalyzes the phosphorylation of glycerol to yield sn-glycerol 3-phosphate. The chain is Glycerol kinase from Haemophilus influenzae (strain 86-028NP).